Reading from the N-terminus, the 85-residue chain is RNA-binding protein Hfq (85 aa).

Residues 10–69 (DPFLNILRKEHVPVSIYLVNGIKLQGQIESFDQYVVLLKNTVTQMVYKHAISTVVPARPV) enclose the Sm domain.

It belongs to the Hfq family. In terms of assembly, homohexamer.

Functionally, RNA chaperone that binds small regulatory RNA (sRNAs) and mRNAs to facilitate mRNA translational regulation in response to envelope stress, environmental stress and changes in metabolite concentrations. Also binds with high specificity to tRNAs. The sequence is that of RNA-binding protein Hfq from Laribacter hongkongensis (strain HLHK9).